The sequence spans 57 residues: Large ribosomal subunit protein bL32 (57 aa).

Over residues 1-20 (MAVPKKKTSKGKRNQRHAVW) the composition is skewed to basic residues. The interval 1 to 23 (MAVPKKKTSKGKRNQRHAVWKAK) is disordered.

This sequence belongs to the bacterial ribosomal protein bL32 family.

This is Large ribosomal subunit protein bL32 from Prochlorococcus marinus (strain SARG / CCMP1375 / SS120).